The chain runs to 763 residues: Phosphoglycerol transferase I (763 aa).

4 consecutive transmembrane segments (helical) span residues 1–21 (MSELLSVALFLASVLIYAWKA), 26–46 (WWFAATLTVLGLFVILNITLY), 77–97 (ILPGIGIALALVAVFGALGWI), and 108–128 (VGYSLLALLLALGSVDASPAF).

The protein belongs to the OpgB family.

Its subcellular location is the cell inner membrane. It carries out the reaction a phosphatidylglycerol + a membrane-derived-oligosaccharide D-glucose = a 1,2-diacyl-sn-glycerol + a membrane-derived-oligosaccharide 6-(glycerophospho)-D-glucose.. It functions in the pathway glycan metabolism; osmoregulated periplasmic glucan (OPG) biosynthesis. Its function is as follows. Transfers a phosphoglycerol residue from phosphatidylglycerol to the membrane-bound nascent glucan backbones. The chain is Phosphoglycerol transferase I from Salmonella paratyphi B (strain ATCC BAA-1250 / SPB7).